We begin with the raw amino-acid sequence, 404 residues long: Alanine racemase (404 aa).

Residue K34 is the Proton acceptor; specific for D-alanine of the active site. K34 is subject to N6-(pyridoxal phosphate)lysine. Residue R133 coordinates substrate. The region spanning 226–273 (EVSSNLSYTEEFESNTAALTTTACINKCPDVSVRLTPKLPLKGSYTVR) is the RPE1 insert domain. Catalysis depends on Y298, which acts as the Proton acceptor; specific for L-alanine. Substrate is bound at residue M346.

It belongs to the alanine racemase family. Pyridoxal 5'-phosphate is required as a cofactor.

The catalysed reaction is L-alanine = D-alanine. It functions in the pathway amino-acid biosynthesis; D-alanine biosynthesis; D-alanine from L-alanine: step 1/1. Functionally, catalyzes the interconversion of L-alanine and D-alanine. May also act on other amino acids. This is Alanine racemase (alr) from Rickettsia prowazekii (strain Madrid E).